The following is a 326-amino-acid chain: Apoptosis facilitator Bcl-2-like protein 14 (326 aa).

S44 is subject to Phosphoserine. A disordered region spans residues 99-127 (TEKEEEPPSSPKEIHAQGPFPVERQGRNQ). The BH3 signature appears at 211-225 (IVELLKYSGDQLGRE). A BH2 motif is present at residues 307 to 314 (WVQQNGGW).

Belongs to the Bcl-2 family. Phosphorylated by MELK, leading to inhibit its pro-apoptotic function.

Its subcellular location is the cytoplasm. In terms of biological role, plays a role in apoptosis. This Rattus norvegicus (Rat) protein is Apoptosis facilitator Bcl-2-like protein 14 (Bcl2l14).